The chain runs to 347 residues: UDP-N-acetylenolpyruvoylglucosamine reductase (347 aa).

The 172-residue stretch at alanine 16 to threonine 187 folds into the FAD-binding PCMH-type domain. The active site involves arginine 163. Serine 233 (proton donor) is an active-site residue. The active site involves glutamate 328.

Belongs to the MurB family. FAD serves as cofactor.

It is found in the cytoplasm. It catalyses the reaction UDP-N-acetyl-alpha-D-muramate + NADP(+) = UDP-N-acetyl-3-O-(1-carboxyvinyl)-alpha-D-glucosamine + NADPH + H(+). It functions in the pathway cell wall biogenesis; peptidoglycan biosynthesis. In terms of biological role, cell wall formation. In Vibrio vulnificus (strain CMCP6), this protein is UDP-N-acetylenolpyruvoylglucosamine reductase.